The sequence spans 294 residues: MENLLRPIYQERASHPNTLAVIMIERRNKTSSLTDNFDAALLVIVKDADEPVFIKHYEFDHQTASLHVVTDSQIQEWILLGTNRRIIDWIVNGRVLFDRNEYVVELIDRLNTFPFAERKLKIGLEYGKLIRRYVEGKAFFEANQFLDAYNAVVHALHHLARIEVIDRGFHPETTVWSQVRQMEPQVYKLYSELIESHESLEKRLELLFLANDFLIHSKAEIGSAHLFEVMKEKDIWQFGELLQHHDLKHFTQDLGVMLDYLTEKGLINVCQIETKGQAVYHRGYSFKKGVDSDS.

This is an uncharacterized protein from Bacillus subtilis (strain 168).